We begin with the raw amino-acid sequence, 101 residues long: Small ribosomal subunit protein uS14 (101 aa).

Belongs to the universal ribosomal protein uS14 family. Part of the 30S ribosomal subunit. Contacts proteins S3 and S10.

Functionally, binds 16S rRNA, required for the assembly of 30S particles and may also be responsible for determining the conformation of the 16S rRNA at the A site. In Actinobacillus pleuropneumoniae serotype 3 (strain JL03), this protein is Small ribosomal subunit protein uS14.